The primary structure comprises 616 residues: Chaperone protein HscA (616 aa).

Belongs to the heat shock protein 70 family.

Functionally, chaperone involved in the maturation of iron-sulfur cluster-containing proteins. Has a low intrinsic ATPase activity which is markedly stimulated by HscB. Involved in the maturation of IscU. This chain is Chaperone protein HscA, found in Photorhabdus laumondii subsp. laumondii (strain DSM 15139 / CIP 105565 / TT01) (Photorhabdus luminescens subsp. laumondii).